The sequence spans 1040 residues: Multidrug resistance protein MdtB (1040 aa).

Helical transmembrane passes span 25–45, 347–367, 369–389, 396–416, 440–460, 472–492, 537–557, 863–883, 888–908, 910–930, 968–988, and 998–1018; these read LLMA…PVAA, LMLA…NIPA, IIPG…MVFL, LTLM…IVVI, IGFT…PLLF, FAVT…TLTP, WLTL…WIVI, LGST…VLGV, FIHP…ALLA, IIAG…LIGI, ILMT…STGV, and IAMV…TPVI.

This sequence belongs to the resistance-nodulation-cell division (RND) (TC 2.A.6) family. MdtB subfamily. In terms of assembly, part of a tripartite efflux system composed of MdtA, MdtB and MdtC. MdtB forms a heteromultimer with MdtC.

Its subcellular location is the cell inner membrane. This is Multidrug resistance protein MdtB from Salmonella paratyphi B (strain ATCC BAA-1250 / SPB7).